Here is a 403-residue protein sequence, read N- to C-terminus: F-box only protein 22 (403 aa).

Met-1 bears the N-acetylmethionine mark. One can recognise an F-box domain in the interval 21-67; sequence FVLSNLAEVVERVLTFLPAKALLRVACVCRLWRECVRRVLRTHRSVT. The residue at position 127 (Thr-127) is a Phosphothreonine. Residue Ser-128 is modified to Phosphoserine. N6-acetyllysine is present on Lys-194.

In terms of assembly, directly interacts with SKP1 and CUL1. Interacts (via C-terminal) with KDM4A. Interacts with TP53. Interacts with MTOR; this interaction promotes 'lys-27'-linked ubiquitination of MTOR. (Microbial infection) Interacts with SARS_COV-2 protein NSP5; this interaction attenuates NSP5-mediated inhibition of innate immunity. Phosphorylated by EIF2AK4 at Thr-127 causes cytoplasmic retention of FBXO22. As to expression, predominantly expressed in liver, also enriched in cardiac muscle.

The protein localises to the cytoplasm. Its subcellular location is the nucleus. The protein resides in the myofibril. It localises to the sarcomere. It is found in the z line. Its function is as follows. Substrate-recognition component of the SCF (SKP1-CUL1-F-box protein)-type E3 ubiquitin ligase complex that is implicated in the control of various cellular processes such as cell cycle control, transcriptional regulation, DNA damage repair, and apoptosis. Promotes the proteasome-dependent degradation of key sarcomeric proteins, such as alpha-actinin (ACTN2) and filamin-C (FLNC), essential for maintenance of normal contractile function. Acts as a key regulator of histone methylation marks namely H3K9 and H3K36 methylation through the regulation of histone demethylase KDM4A protein levels. In complex with KDM4A, also regulates the abundance of TP53 by targeting methylated TP53 for degradation at the late senescent stage. Under oxidative stress, promotes the ubiquitination and degradation of BACH1. Mechanistically, reactive oxygen species (ROS) covalently modify cysteine residues on the bZIP domain of BACH1, leading to its release from chromatin and making it accessible to FBXO22. Upon amino acid depletion, mediates 'Lys-27'-linked ubiquitination of MTOR and thereby inhibits substrate recruitment to mTORC1. Also inhibits SARS-CoV-2 replication by inducing NSP5 degradation. The chain is F-box only protein 22 (FBXO22) from Homo sapiens (Human).